The sequence spans 341 residues: tRNA N6-adenosine threonylcarbamoyltransferase (341 aa).

H111 and H115 together coordinate Fe cation. Residues 134 to 138, D167, G180, and N270 each bind substrate; that span reads LVSGG. D298 is a binding site for Fe cation.

The protein belongs to the KAE1 / TsaD family. It depends on Fe(2+) as a cofactor.

It is found in the cytoplasm. It carries out the reaction L-threonylcarbamoyladenylate + adenosine(37) in tRNA = N(6)-L-threonylcarbamoyladenosine(37) in tRNA + AMP + H(+). In terms of biological role, required for the formation of a threonylcarbamoyl group on adenosine at position 37 (t(6)A37) in tRNAs that read codons beginning with adenine. Is involved in the transfer of the threonylcarbamoyl moiety of threonylcarbamoyl-AMP (TC-AMP) to the N6 group of A37, together with TsaE and TsaB. TsaD likely plays a direct catalytic role in this reaction. The sequence is that of tRNA N6-adenosine threonylcarbamoyltransferase from Thiobacillus denitrificans (strain ATCC 25259 / T1).